Here is a 270-residue protein sequence, read N- to C-terminus: ATP synthase subunit delta (270 aa).

This sequence belongs to the ATPase delta chain family. F-type ATPases have 2 components, F(1) - the catalytic core - and F(0) - the membrane proton channel. F(1) has five subunits: alpha(3), beta(3), gamma(1), delta(1), epsilon(1). F(0) has three main subunits: a(1), b(2) and c(10-14). The alpha and beta chains form an alternating ring which encloses part of the gamma chain. F(1) is attached to F(0) by a central stalk formed by the gamma and epsilon chains, while a peripheral stalk is formed by the delta and b chains.

It localises to the cell membrane. Functionally, f(1)F(0) ATP synthase produces ATP from ADP in the presence of a proton or sodium gradient. F-type ATPases consist of two structural domains, F(1) containing the extramembraneous catalytic core and F(0) containing the membrane proton channel, linked together by a central stalk and a peripheral stalk. During catalysis, ATP synthesis in the catalytic domain of F(1) is coupled via a rotary mechanism of the central stalk subunits to proton translocation. This protein is part of the stalk that links CF(0) to CF(1). It either transmits conformational changes from CF(0) to CF(1) or is implicated in proton conduction. This chain is ATP synthase subunit delta, found in Kocuria rhizophila (strain ATCC 9341 / DSM 348 / NBRC 103217 / DC2201).